The following is a 65-amino-acid chain: UPF0434 protein BQ10150 (65 aa).

The protein belongs to the UPF0434 family.

In Bartonella quintana (strain Toulouse) (Rochalimaea quintana), this protein is UPF0434 protein BQ10150.